Here is a 178-residue protein sequence, read N- to C-terminus: Probable coatomer subunit zeta-B (178 aa).

The protein belongs to the adaptor complexes small subunit family. Oligomeric complex that consists of at least the alpha, beta, beta', gamma, delta, epsilon and zeta subunits.

It localises to the cytoplasm. It is found in the golgi apparatus membrane. The protein localises to the cytoplasmic vesicle. The protein resides in the COPI-coated vesicle membrane. In terms of biological role, the coatomer is a cytosolic protein complex that binds to dilysine motifs and reversibly associates with Golgi non-clathrin-coated vesicles, which further mediate biosynthetic protein transport from the ER, via the Golgi up to the trans Golgi network. Coatomer complex is required for budding from Golgi membranes, and is essential for the retrograde Golgi-to-ER transport of dilysine-tagged proteins. The zeta subunit may be involved in regulating the coat assembly and, hence, the rate of biosynthetic protein transport due to its association-dissociation properties with the coatomer complex. The polypeptide is Probable coatomer subunit zeta-B (copZb) (Dictyostelium discoideum (Social amoeba)).